A 496-amino-acid chain; its full sequence is MADESETAVKLPAPSLPLMMEGNGNGHEHCSDCENEEDNSHNRSGLSPANDTGAKKKKKKQKKKKEKGSDMESTQDQPVKMTSLPAERIQEIQKAIELFSVGQGPAKTMEEASKRSYQFWDTQPVPKLGEVVNTHGPVEPDKDNIRQEPYTLPQGFTWDALDLGDRGVLKELYTLLNENYVEDDDNMFRFDYSPEFLLWALRPPGWLPQWHCGVRVVSSRKLVGFISAIPANIHIYDTEKKMVEINFLCVHKKLRSKRVAPVLIREITRRVHLEGIFQAVYTAGVVLPKPVGTCRYWHRSLNPRKLIEVKFSHLSRNMTMQRTMKLYRLPETPKTAGLRPMEKKDIPVVHQLLSRYLKQFHLTPVMNQEEVEHWFYPQENIIDTFVVENANGEVTDFLSFYTLPSTIMNHPTHKSLKAAYSFYNVHTQTPLLDLMSDALVLAKMKGFDVFNALDLMENKTFLEKLKFGIGDGNLQYYLYNWKCPSMGAEKVGLVLQ.

Positions 1–82 (MADESETAVK…STQDQPVKMT (82 aa)) are disordered. Serine 31 and serine 47 each carry phosphoserine. A compositionally biased stretch (basic residues) spans 55-66 (KKKKKKQKKKKE). A Phosphoserine modification is found at serine 83. Glutamine 118, phenylalanine 119, tryptophan 120, phenylalanine 247, leucine 248, cysteine 249, valine 250, serine 256, arginine 258, valine 259, and alanine 260 together coordinate tetradecanoyl-CoA.

It belongs to the NMT family. As to expression, ubiquitous.

It is found in the cytoplasm. The protein resides in the cytosol. It localises to the membrane. The enzyme catalyses N-terminal glycyl-[protein] + tetradecanoyl-CoA = N-tetradecanoylglycyl-[protein] + CoA + H(+). It carries out the reaction N-terminal glycyl-L-lysyl-[protein] + tetradecanoyl-CoA = N-terminal glycyl-(N(6)-tetradecanoyl)-L-lysyl-[protein] + CoA + H(+). Adds a myristoyl group to the N-terminal glycine residue of certain cellular and viral proteins. Also able to mediate N-terminal lysine myristoylation of proteins: catalyzes myristoylation of ARF6 on both 'Gly-2' and 'Lys-3'. Lysine myristoylation is required to maintain ARF6 on membranes during the GTPase cycle. Required for normal embryogenesis. The chain is Glycylpeptide N-tetradecanoyltransferase 1 from Mus musculus (Mouse).